The primary structure comprises 126 residues: MPEPSKSAPAPKKGSKKAISKAQKKDGKKRKRSRKESYSVYVYKVLKQVHPDTGISSKAMGIMNSFVNDIFERIASEASRLAHYNKRSTITSREIQTAVRLLLPGELAKHAVSEGTKAVTKYTSSK.

The segment covering 1 to 12 has biased composition (low complexity); that stretch reads MPEPSKSAPAPK. Positions 1–36 are disordered; it reads MPEPSKSAPAPKKGSKKAISKAQKKDGKKRKRSRKE. Residue Pro2 is modified to N-acetylproline. Residue Glu3 is modified to ADP-ribosyl glutamic acid. The residue at position 6 (Lys6) is an N6-(2-hydroxyisobutyryl)lysine; alternate. Lys6 is subject to N6-(beta-hydroxybutyryl)lysine; alternate. Lys6 is subject to N6-acetyllysine; alternate. At Lys6 the chain carries N6-butyryllysine; alternate. Position 6 is an N6-crotonyllysine; alternate (Lys6). At Lys6 the chain carries N6-lactoyllysine; alternate. A Glycyl lysine isopeptide (Lys-Gly) (interchain with G-Cter in SUMO2); alternate cross-link involves residue Lys6. Ser7 bears the ADP-ribosylserine mark. Residue Lys12 is modified to N6-(beta-hydroxybutyryl)lysine; alternate. N6-acetyllysine; alternate occurs at positions 12 and 13. 2 positions are modified to N6-crotonyllysine; alternate: Lys12 and Lys13. Position 12 is an N6-lactoyllysine; alternate (Lys12). Lys13 carries the N6-(2-hydroxyisobutyryl)lysine; alternate modification. A Phosphoserine; by STK4/MST1 modification is found at Ser15. N6-acetyllysine; alternate is present on residues Lys16, Lys17, Lys21, and Lys24. Lys16, Lys17, Lys21, and Lys24 each carry N6-crotonyllysine; alternate. Residues Lys16, Lys17, Lys21, and Lys24 each carry the N6-lactoyllysine; alternate modification. N6-glutaryllysine; alternate is present on Lys17. N6-(2-hydroxyisobutyryl)lysine; alternate occurs at positions 21 and 24. At Lys21 the chain carries N6-(beta-hydroxybutyryl)lysine; alternate. The residue at position 21 (Lys21) is an N6-butyryllysine; alternate. Lys21 participates in a covalent cross-link: Glycyl lysine isopeptide (Lys-Gly) (interchain with G-Cter in SUMO2); alternate. Position 25 is an N6-(2-hydroxyisobutyryl)lysine (Lys25). Position 35 is an N6-(2-hydroxyisobutyryl)lysine; alternate (Lys35). Lys35 is modified (N6-(beta-hydroxybutyryl)lysine; alternate). Lys35 is modified (N6-crotonyllysine; alternate). Lys35 carries the N6-glutaryllysine; alternate modification. Lys35 is subject to N6-succinyllysine; alternate. A Glycyl lysine isopeptide (Lys-Gly) (interchain with G-Cter in ubiquitin); alternate cross-link involves residue Lys35. Glu36 carries the post-translational modification PolyADP-ribosyl glutamic acid. Phosphoserine; by AMPK is present on Ser37. Residues Lys44, Lys47, and Lys58 each carry the N6-(2-hydroxyisobutyryl)lysine; alternate modification. Position 44 is an N6-lactoyllysine; alternate (Lys44). N6-glutaryllysine; alternate occurs at positions 44 and 47. N6-methyllysine; alternate is present on Lys47. Lys58 is subject to N6,N6-dimethyllysine; alternate. Arg80 is subject to Dimethylated arginine. Lys86 is subject to N6-(2-hydroxyisobutyryl)lysine; alternate. Lys86 carries the post-translational modification N6-acetyllysine; alternate. Lys86 carries the post-translational modification N6-lactoyllysine; alternate. The residue at position 86 (Lys86) is an N6,N6,N6-trimethyllysine; alternate. Omega-N-methylarginine is present on residues Arg87 and Arg93. The residue at position 109 (Lys109) is an N6-(2-hydroxyisobutyryl)lysine; alternate. The residue at position 109 (Lys109) is an N6-(beta-hydroxybutyryl)lysine; alternate. Lys109 is subject to N6-lactoyllysine; alternate. N6-glutaryllysine; alternate is present on Lys109. Lys109 carries the post-translational modification N6-methyllysine; alternate. Ser113 is a glycosylation site (O-linked (GlcNAc) serine). A Phosphothreonine modification is found at Thr116. N6-(2-hydroxyisobutyryl)lysine; alternate is present on residues Lys117 and Lys121. Lys117 carries the N6-(beta-hydroxybutyryl)lysine; alternate modification. Residues Lys117 and Lys121 each carry the N6-lactoyllysine; alternate modification. An N6-glutaryllysine; alternate mark is found at Lys117 and Lys121. N6-succinyllysine; alternate occurs at positions 117 and 121. Residue Lys117 is modified to N6-methylated lysine; alternate. Lys121 is covalently cross-linked (Glycyl lysine isopeptide (Lys-Gly) (interchain with G-Cter in ubiquitin); alternate).

The protein belongs to the histone H2B family. In terms of assembly, the nucleosome is a histone octamer containing two molecules each of H2A, H2B, H3 and H4 assembled in one H3-H4 heterotetramer and two H2A-H2B heterodimers. The octamer wraps approximately 147 bp of DNA. In terms of processing, monoubiquitination at Lys-35 (H2BK34Ub) by the MSL1/MSL2 dimer is required for histone H3 'Lys-4' (H3K4me) and 'Lys-79' (H3K79me) methylation and transcription activation at specific gene loci, such as HOXA9 and MEIS1 loci. Similarly, monoubiquitination at Lys-121 (H2BK120Ub) by the RNF20/40 complex gives a specific tag for epigenetic transcriptional activation and is also prerequisite for histone H3 'Lys-4' and 'Lys-79' methylation. It also functions cooperatively with the FACT dimer to stimulate elongation by RNA polymerase II. H2BK120Ub also acts as a regulator of mRNA splicing: deubiquitination by USP49 is required for efficient cotranscriptional splicing of a large set of exons. Phosphorylated on Ser-15 (H2BS14ph) by STK4/MST1 during apoptosis; which facilitates apoptotic chromatin condensation. Also phosphorylated on Ser-15 in response to DNA double strand breaks (DSBs), and in correlation with somatic hypermutation and immunoglobulin class-switch recombination. Phosphorylation at Ser-37 (H2BS36ph) by AMPK in response to stress promotes transcription. Post-translationally, glcNAcylation at Ser-113 promotes monoubiquitination of Lys-121. It fluctuates in response to extracellular glucose, and associates with transcribed genes. In terms of processing, ADP-ribosylated by PARP1 or PARP2 on Ser-7 (H2BS6ADPr) in response to DNA damage. H2BS6ADPr promotes recruitment of CHD1L. Mono-ADP-ribosylated on Glu-3 (H2BE2ADPr) by PARP3 in response to single-strand breaks. Poly ADP-ribosylation on Glu-36 (H2BE35ADPr) by PARP1 regulates adipogenesis: it inhibits phosphorylation at Ser-37 (H2BS36ph), thereby blocking expression of pro-adipogenetic genes. Hydroxybutyrylation of histones is induced by starvation. Post-translationally, crotonylation (Kcr) is specifically present in male germ cells and marks testis-specific genes in post-meiotic cells, including X-linked genes that escape sex chromosome inactivation in haploid cells. Crotonylation marks active promoters and enhancers and confers resistance to transcriptional repressors. It is also associated with post-meiotically activated genes on autosomes. In terms of processing, lactylated in macrophages by EP300/P300 by using lactoyl-CoA directly derived from endogenous or exogenous lactate, leading to stimulates gene transcription.

Its subcellular location is the nucleus. The protein localises to the chromosome. Functionally, core component of nucleosome. Nucleosomes wrap and compact DNA into chromatin, limiting DNA accessibility to the cellular machineries which require DNA as a template. Histones thereby play a central role in transcription regulation, DNA repair, DNA replication and chromosomal stability. DNA accessibility is regulated via a complex set of post-translational modifications of histones, also called histone code, and nucleosome remodeling. The sequence is that of Histone H2B type 1-B from Mus musculus (Mouse).